The primary structure comprises 1051 residues: Leucine zipper protein 1 (1051 aa).

Ala2 is modified (N-acetylalanine). Residues 11–354 are a coiled coil; that stretch reads ASNRHLRFKL…KLQVKKQKEL (344 aa). Disordered stretches follow at residues 247-293, 374-401, 432-554, and 569-601; these read ISST…KDLN, RTKL…HKRE, AAKA…SQVT, and ASSQ…SKAP. Residues 254–293 are compositionally biased toward basic and acidic residues; the sequence is KESRRKGSLDYLKQVENETRDKSENEKNRNQEDNKVKDLN. A phosphoserine mark is found at Ser256, Ser261, Ser395, Ser513, Ser571, Ser575, Ser612, and Ser660. Residues 569–578 show a composition bias toward polar residues; sequence ASSQRASSEG. A disordered region spans residues 675–727; that stretch reads VNTTITPEPEPKLQPNSREKVKSRGGTRTPLFENDKNAAVENDSAKSMRSSSN. A Phosphothreonine modification is found at Thr680. The residue at position 691 (Ser691) is a Phosphoserine. The span at 707 to 720 shows a compositional bias: basic and acidic residues; that stretch reads ENDKNAAVENDSAK. Position 746 is a phosphoserine (Ser746). The segment covering 789-799 has biased composition (low complexity); sequence VTSKVTSSITI. Residues 789–837 are disordered; sequence VTSKVTSSITIYPSDSSGPRAVPTEAPRERHTSTSNIQVGPPELTSVSN. The required for interaction with FLNA stretch occupies residues 834-884; it reads SVSNHISSPLELSIHKHDITLQLTEAERVGDGSPKNRAETVVSRSSILIKP. At Ser906 the chain carries Phosphoserine. Residues 929 to 938 are compositionally biased toward basic and acidic residues; that stretch reads RDLKCSEDPP. The interval 929–1000 is disordered; it reads RDLKCSEDPP…TQSSLTASEV (72 aa). Polar residues-rich tracts occupy residues 946–958 and 989–999; these read EATN…SSTD and RRTQSSLTASE. Phosphothreonine is present on Thr957. Phosphoserine is present on Ser993.

As to quaternary structure, component of the CERF-1 ISWI chromatin remodeling complex (also called the CECR2-containing remodeling factor (CERF) complex) at least composed of CECR2 and SMARCA1. Component of the CERF-5 ISWI chromatin remodeling complex at least composed of CECR2 and SMARCA5/SNF2H. LUZP1 is detected as part of the CERF-1 and CERF-5 complexes in embryonic stem (ES) cells where it is involved in complex stabilization but is not detected in the complexes in the testis. Interacts (via C-terminus) with LIMA1/EPLIN; both proteins restrict ciliation and may work together to regulate this process. Interacts with myosin light chain MYL9; the interaction results in inhibition of phosphorylation of MYL9 by DAPK3. Interacts with DAPK3; the interaction is likely to occur throughout the cell cycle and reduces the LUZP1-mediated suppression of MYL9 phosphorylation. Interacts with the chromosomal passenger complex (CPC); CPC kinase activity is required for localization of LUZP1 to the centromere. In terms of tissue distribution, expressed in cerebral cortex, cerebellum, hippocampus and brain stem.

The protein resides in the cytoplasm. It is found in the cytoskeleton. The protein localises to the microtubule organizing center. It localises to the centrosome. Its subcellular location is the cilium basal body. The protein resides in the midbody. It is found in the chromosome. The protein localises to the centromere. It localises to the spindle. Its subcellular location is the stress fiber. The protein resides in the nucleus. It is found in the cell projection. The protein localises to the dendrite. It localises to the perikaryon. Its subcellular location is the cell junction. The protein resides in the tight junction. Functionally, F-actin cross-linking protein. Stabilizes actin and acts as a negative regulator of primary cilium formation. Positively regulates the phosphorylation of both myosin II and protein phosphatase 1 regulatory subunit PPP1R12A/MYPT1 and promotes the assembly of myosin II stacks within actin stress fibers. Inhibits the phosphorylation of myosin light chain MYL9 by DAPK3 and suppresses the constriction velocity of the contractile ring during cytokinesis. Binds to microtubules and promotes epithelial cell apical constriction by up-regulating levels of diphosphorylated myosin light chain (MLC) through microtubule-dependent inhibition of MLC dephosphorylation by myosin phosphatase. Involved in regulation of cell migration, nuclear size and centriole number, probably through regulation of the actin cytoskeleton. Component of the CERF-1 and CERF-5 chromatin remodeling complexes in embryonic stem cells where it acts to stabilize the complexes. Plays a role in embryonic brain and cardiovascular development. This chain is Leucine zipper protein 1 (Luzp1), found in Rattus norvegicus (Rat).